We begin with the raw amino-acid sequence, 104 residues long: uncharacterized protein (104 aa).

The chain crosses the membrane as a helical span at residues 77–98 (IAAVRANIIICACFFYLFCYCS).

The protein localises to the membrane. This is an uncharacterized protein from Saccharomyces cerevisiae (strain ATCC 204508 / S288c) (Baker's yeast).